The following is a 163-amino-acid chain: Extracellular giant hemoglobin major globin subunit B2 (163 aa).

An N-terminal signal peptide occupies residues 1 to 16 (MIALFVLMGLMAAASA). Positions 19 to 163 (CCSSEDRANV…RIANGISAGL (145 aa)) constitute a Globin domain. C20 and C151 are disulfide-bonded. C83 contributes to the hydrogen sulfide binding site. Residue H114 coordinates heme b.

This sequence belongs to the globin family. As to quaternary structure, the 400 kDa hemoglobin consists of a spherical 24-mer arranged as a double layer of dome-shaped dodecamers. Each dodecamer is composed of the 3-fold trimer of the tetramer A1-A2-B1-B2 having one intra-tetramer (A1-B2) disulfide bond and one inter-tetramer (B1-B2) disulfide bond per tetramer.

The protein resides in the secreted. In terms of biological role, the extracellular giant hemoglobin is able to bind and transport oxygen and hydrosulfide simultaneously and reversibly at two different sites. The sequence is that of Extracellular giant hemoglobin major globin subunit B2 (ghbB2) from Oligobrachia mashikoi (Beard worm).